The chain runs to 347 residues: D-alanine--D-alanine ligase (347 aa).

In terms of domain architecture, ATP-grasp spans 138–339 (KILCSHAGIP…YSQVIETILA (202 aa)). Residue 171–226 (SDRFTFPLFVKPVDAGSSFGCTFVDFFEQLPVAIEHALQHGKSAIVEPALDAPEVF) participates in ATP binding. Positions 296, 308, and 310 each coordinate Mg(2+).

Belongs to the D-alanine--D-alanine ligase family. Requires Mg(2+) as cofactor. Mn(2+) serves as cofactor.

It is found in the cytoplasm. The catalysed reaction is 2 D-alanine + ATP = D-alanyl-D-alanine + ADP + phosphate + H(+). The protein operates within cell wall biogenesis; peptidoglycan biosynthesis. Cell wall formation. The sequence is that of D-alanine--D-alanine ligase from Tropheryma whipplei (strain Twist) (Whipple's bacillus).